The following is a 45-amino-acid chain: Mu-conotoxin-like Cal 12.1.2a (45 aa).

4 cysteine pairs are disulfide-bonded: cysteine 3/cysteine 16, cysteine 11/cysteine 28, cysteine 18/cysteine 33, and cysteine 27/cysteine 39. Residue proline 23 is modified to 4-hydroxyproline. 6'-bromotryptophan occurs at positions 37 and 38. A 4-hydroxyproline modification is found at proline 40. At tryptophan 44 the chain carries 6'-bromotryptophan.

Expressed by the venom duct.

Its subcellular location is the secreted. In terms of biological role, mu-conotoxins block voltage-gated sodium channels. This toxin reversibly blocks voltage-gated sodium channel in cephalopods, with no alteration in the voltage dependence of sodium conductance or on the kinetics of inactivation. This chain is Mu-conotoxin-like Cal 12.1.2a, found in Californiconus californicus (California cone).